The following is a 312-amino-acid chain: Aquaporin Lacbi1:391485 (312 aa).

Residues 1 to 50 (MDDKFDDDALPNSKTTPEDYGDKLAEYDYTNTFPNTWMRLREPFREYIAE) lie on the Cytoplasmic side of the membrane. Residues 51 to 71 (FVGVAVLIIFGVGADCQVVLS) form a helical membrane-spanning segment. The Extracellular portion of the chain corresponds to 72–89 (ANTGVAPSPKGDYLSLNC). Residues 90-110 (GWAIGTAMGVWISGGISGGHI) form a helical membrane-spanning segment. Positions 111-113 (NPA) match the NPA 1 motif. The Cytoplasmic segment spans residues 111–128 (NPAVTLALMAWRGFPWWK). A helical transmembrane segment spans residues 129-149 (VPGFIFAQLLGGIVGAGLVYV). The Extracellular portion of the chain corresponds to 150 to 183 (NYIHAIDIVEGGRHIRTLDTAGLFATYAADYMTN). Asparagine 183 carries N-linked (GlcNAc...) asparagine glycosylation. Residues 184–204 (VSCFFSEFLATAVLIVVIHAM) traverse the membrane as a helical segment. The Cytoplasmic segment spans residues 205 to 213 (NDKRNAPPP). A helical membrane pass occupies residues 214–234 (AGLAPLVLFFLILGIGASLGM). Residues 235–267 (ETGYAINPARDLGPRMLTAMVGYGRQVFAFRNQ) lie on the Extracellular side of the membrane. Positions 241–243 (NPA) match the NPA 2 motif. The helical transmembrane segment at 268 to 288 (YWIWCPVIAPFLGAQVGTIFY) threads the bilayer. The Cytoplasmic segment spans residues 289–312 (DLFFYKGQDNVFGRLGSHIHISPA).

This sequence belongs to the MIP/aquaporin (TC 1.A.8) family.

The protein localises to the membrane. The enzyme catalyses H2O(in) = H2O(out). It catalyses the reaction glycerol(in) = glycerol(out). It carries out the reaction NH4(+)(in) = NH4(+)(out). Functionally, water channel required to facilitate the transport of water across membranes. In addition to water, also shows strong glycerol and ammonium transport activities. May be involved in fungal nitrogen (ammonium) support of the plant host in symbiosis. Glycerol accumulation has never been observed in ectomycorrhizal (ECM) fungi, therefore, glycerol permeability of Lacbi1:391485 might be a relict of the affiliation of the protein to the group of aquaglyceroporins, and other osmotic active compounds (e.g. trehalose or mannitol) may have taken over glycerol function in ECM fungi. The polypeptide is Aquaporin Lacbi1:391485 (Laccaria bicolor (strain S238N-H82 / ATCC MYA-4686) (Bicoloured deceiver)).